Consider the following 221-residue polypeptide: Imidazole glycerol phosphate synthase subunit HisH (221 aa).

In terms of domain architecture, Glutamine amidotransferase type-1 spans 9 to 221; that stretch reads DVVIIDTGCA…QILGNFLKMQ (213 aa). Cysteine 84 acts as the Nucleophile in catalysis. Residues histidine 202 and glutamate 204 contribute to the active site.

In terms of assembly, heterodimer of HisH and HisF.

It localises to the cytoplasm. It catalyses the reaction 5-[(5-phospho-1-deoxy-D-ribulos-1-ylimino)methylamino]-1-(5-phospho-beta-D-ribosyl)imidazole-4-carboxamide + L-glutamine = D-erythro-1-(imidazol-4-yl)glycerol 3-phosphate + 5-amino-1-(5-phospho-beta-D-ribosyl)imidazole-4-carboxamide + L-glutamate + H(+). It carries out the reaction L-glutamine + H2O = L-glutamate + NH4(+). The protein operates within amino-acid biosynthesis; L-histidine biosynthesis; L-histidine from 5-phospho-alpha-D-ribose 1-diphosphate: step 5/9. Its function is as follows. IGPS catalyzes the conversion of PRFAR and glutamine to IGP, AICAR and glutamate. The HisH subunit catalyzes the hydrolysis of glutamine to glutamate and ammonia as part of the synthesis of IGP and AICAR. The resulting ammonia molecule is channeled to the active site of HisF. This Shewanella oneidensis (strain ATCC 700550 / JCM 31522 / CIP 106686 / LMG 19005 / NCIMB 14063 / MR-1) protein is Imidazole glycerol phosphate synthase subunit HisH.